We begin with the raw amino-acid sequence, 500 residues long: Histidine--tRNA ligase (500 aa).

This sequence belongs to the class-II aminoacyl-tRNA synthetase family. Homodimer.

It localises to the cytoplasm. It carries out the reaction tRNA(His) + L-histidine + ATP = L-histidyl-tRNA(His) + AMP + diphosphate + H(+). This chain is Histidine--tRNA ligase, found in Ruegeria sp. (strain TM1040) (Silicibacter sp.).